Consider the following 215-residue polypeptide: Protein-L-isoaspartate O-methyltransferase (215 aa).

Residue S62 is part of the active site.

Belongs to the methyltransferase superfamily. L-isoaspartyl/D-aspartyl protein methyltransferase family.

The protein resides in the cytoplasm. The catalysed reaction is [protein]-L-isoaspartate + S-adenosyl-L-methionine = [protein]-L-isoaspartate alpha-methyl ester + S-adenosyl-L-homocysteine. Functionally, catalyzes the methyl esterification of L-isoaspartyl residues in peptides and proteins that result from spontaneous decomposition of normal L-aspartyl and L-asparaginyl residues. It plays a role in the repair and/or degradation of damaged proteins. In Bradyrhizobium sp. (strain BTAi1 / ATCC BAA-1182), this protein is Protein-L-isoaspartate O-methyltransferase.